The following is a 248-amino-acid chain: MIAPLANSAVKPHKSASFVPRHVAIIMDGNGRWASARHLPRIAGHKKGADAVKTTVRAAAEMGIEVLTLYAFSSENWRRPASEVADLMGLLRLCLRQEMHNIKERGICLKVIGDYTRLDQDLVALLNQAIEITANNTRLTLVFALNYGAQDELVHVTKRIAEKAKEGQLDPENIDVGTIESLLYTHDLPPLDLVIRTSGEKRLSNFLLWQAAYAELLFIDTLWPDFGSETLKAAVEEYARRERRYGGL.

Aspartate 28 is an active-site residue. Residue aspartate 28 coordinates Mg(2+). Substrate-binding positions include 29-32 (GNGR), tryptophan 33, arginine 41, histidine 45, and 73-75 (SSE). The Proton acceptor role is filled by asparagine 76. Residues tryptophan 77, arginine 79, arginine 196, and 202–204 (RLS) contribute to the substrate site. Residue glutamate 215 participates in Mg(2+) binding.

This sequence belongs to the UPP synthase family. Homodimer. It depends on Mg(2+) as a cofactor.

Its function is as follows. Catalyzes the condensation of isopentenyl diphosphate (IPP) with allylic pyrophosphates generating different type of terpenoids. The sequence is that of Isoprenyl transferase from Zymomonas mobilis subsp. mobilis (strain ATCC 31821 / ZM4 / CP4).